A 429-amino-acid chain; its full sequence is UDP-N-acetylglucosamine 1-carboxyvinyltransferase (429 aa).

22–23 serves as a coordination point for phosphoenolpyruvate; the sequence is KN. Arginine 102 lines the UDP-N-acetyl-alpha-D-glucosamine pocket. The active-site Proton donor is the cysteine 126. Position 126 is a 2-(S-cysteinyl)pyruvic acid O-phosphothioketal (cysteine 126). Residues 131–135, aspartate 316, and isoleucine 338 each bind UDP-N-acetyl-alpha-D-glucosamine; that span reads RPVDL.

This sequence belongs to the EPSP synthase family. MurA subfamily.

The protein resides in the cytoplasm. It catalyses the reaction phosphoenolpyruvate + UDP-N-acetyl-alpha-D-glucosamine = UDP-N-acetyl-3-O-(1-carboxyvinyl)-alpha-D-glucosamine + phosphate. The protein operates within cell wall biogenesis; peptidoglycan biosynthesis. Its function is as follows. Cell wall formation. Adds enolpyruvyl to UDP-N-acetylglucosamine. The protein is UDP-N-acetylglucosamine 1-carboxyvinyltransferase of Methylorubrum populi (strain ATCC BAA-705 / NCIMB 13946 / BJ001) (Methylobacterium populi).